A 187-amino-acid polypeptide reads, in one-letter code: Elongation factor P (187 aa).

The residue at position 34 (K34) is an N6-(3,6-diaminohexanoyl)-5-hydroxylysine.

The protein belongs to the elongation factor P family. Post-translationally, may be beta-lysylated on the epsilon-amino group of Lys-34 by the combined action of EpmA and EpmB, and then hydroxylated on the C5 position of the same residue by EpmC (if this protein is present). Lysylation is critical for the stimulatory effect of EF-P on peptide-bond formation. The lysylation moiety may extend toward the peptidyltransferase center and stabilize the terminal 3-CCA end of the tRNA. Hydroxylation of the C5 position on Lys-34 may allow additional potential stabilizing hydrogen-bond interactions with the P-tRNA.

The protein resides in the cytoplasm. It functions in the pathway protein biosynthesis; polypeptide chain elongation. Functionally, involved in peptide bond synthesis. Alleviates ribosome stalling that occurs when 3 or more consecutive Pro residues or the sequence PPG is present in a protein, possibly by augmenting the peptidyl transferase activity of the ribosome. Modification of Lys-34 is required for alleviation. The polypeptide is Elongation factor P (Buchnera aphidicola subsp. Schizaphis graminum (strain Sg)).